The chain runs to 123 residues: Small ribosomal subunit protein uS12cz/uS12cy (123 aa).

This sequence belongs to the universal ribosomal protein uS12 family. As to quaternary structure, part of the 30S ribosomal subunit.

It is found in the plastid. The protein localises to the chloroplast. In terms of biological role, with S4 and S5 plays an important role in translational accuracy. Located at the interface of the 30S and 50S subunits. The protein is Small ribosomal subunit protein uS12cz/uS12cy (rps12-A) of Angiopteris evecta (Mule's foot fern).